The sequence spans 159 residues: C-type lectin BJcuL (159 aa).

The first 24 residues, 1 to 24 (MGRFLFVASSACWFVFLSLSGAKG), serve as a signal peptide directing secretion. 4 disulfides stabilise this stretch: cysteine 27–cysteine 38, cysteine 55–cysteine 155, cysteine 62–cysteine 157, and cysteine 130–cysteine 147. In terms of domain architecture, C-type lectin spans 34–156 (MNGLCYKIFN…CESKNAFLCQ (123 aa)). The Ca(2+) site is built by glutamine 120, aspartate 122, glutamate 128, asparagine 143, and aspartate 144. The Galactose-binding signature appears at 120–122 (QPD).

Belongs to the true venom lectin family. As to quaternary structure, homodecamer of disulfide-linked dimers arranged in two 5-fold symmetric pentamers. Binds the gentamicin group of aminoglycoside antibiotics at the dimeric interface near the intermolecular disulfide bond. In terms of tissue distribution, expressed by the venom gland.

Its subcellular location is the secreted. Its activity is regulated as follows. Hemagglutination activity is inhibited by lactose (MIC=2.5 mM), galactose (MIC=10 mM), and raffinose. Is very weakly or not inhibited by gentamicin, kanamycin, glucose and sucrose. Functionally, galactose-binding lectin which recognizes specific carbohydrate structures and agglutinates a variety of animal cells by binding to cell-surface glycoproteins and glycolipids. Calcium-dependent lectin. Also binds lactose and raffinose. Shows high hemagglutinating activity on mammalian erythrocytes. It also involved in immunological functions, since it is able of inducing potent neutrophil activation. In vivo, it causes edema and increases vascular permeability after injection into mouse hind paws (10-100 ug/paw). In anesthetized rats, it decreases the blood pressure by approximately 15%, with a rapid return to the resting level. Is an effective inhibitor of cell growth in some cancer cell lines, especially against renal and pancreatic cancer cell lines, human breast and ovarian carcinoma, glioblastoma and a bovine brain microvascular endothelial cell line. The chain is C-type lectin BJcuL from Bothrops jararacussu (Jararacussu).